Here is a 520-residue protein sequence, read N- to C-terminus: Putative thymidine phosphorylase 1 (520 aa).

The protein belongs to the thymidine/pyrimidine-nucleoside phosphorylase family. Type 2 subfamily.

The catalysed reaction is thymidine + phosphate = 2-deoxy-alpha-D-ribose 1-phosphate + thymine. The sequence is that of Putative thymidine phosphorylase 1 from Cupriavidus necator (strain ATCC 17699 / DSM 428 / KCTC 22496 / NCIMB 10442 / H16 / Stanier 337) (Ralstonia eutropha).